The following is a 393-amino-acid chain: 8-amino-7-oxononanoate synthase (393 aa).

A pyridoxal 5'-phosphate-binding site is contributed by 107–108 (GF). His132 is a substrate binding site. Residues Ser180, 205-208 (DDAH), and 236-239 (TLSK) each bind pyridoxal 5'-phosphate. Lys239 carries the N6-(pyridoxal phosphate)lysine modification. Thr353 contacts substrate.

This sequence belongs to the class-II pyridoxal-phosphate-dependent aminotransferase family. BioF subfamily. As to quaternary structure, homodimer. It depends on pyridoxal 5'-phosphate as a cofactor.

The enzyme catalyses 6-carboxyhexanoyl-[ACP] + L-alanine + H(+) = (8S)-8-amino-7-oxononanoate + holo-[ACP] + CO2. It functions in the pathway cofactor biosynthesis; biotin biosynthesis. Its function is as follows. Catalyzes the decarboxylative condensation of pimeloyl-[acyl-carrier protein] and L-alanine to produce 8-amino-7-oxononanoate (AON), [acyl-carrier protein], and carbon dioxide. In Coprothermobacter proteolyticus (strain ATCC 35245 / DSM 5265 / OCM 4 / BT), this protein is 8-amino-7-oxononanoate synthase.